Here is a 237-residue protein sequence, read N- to C-terminus: Purine nucleoside phosphorylase DeoD-type (237 aa).

Position 4 (histidine 4) interacts with a purine D-ribonucleoside. Residues glycine 20, arginine 24, arginine 43, and 87–90 (RVGT) each bind phosphate. Residues 179-181 (EME) and 203-204 (SD) each bind a purine D-ribonucleoside. The active-site Proton donor is the aspartate 204.

It belongs to the PNP/UDP phosphorylase family. As to quaternary structure, homohexamer; trimer of homodimers.

The catalysed reaction is a purine D-ribonucleoside + phosphate = a purine nucleobase + alpha-D-ribose 1-phosphate. It catalyses the reaction a purine 2'-deoxy-D-ribonucleoside + phosphate = a purine nucleobase + 2-deoxy-alpha-D-ribose 1-phosphate. In terms of biological role, catalyzes the reversible phosphorolytic breakdown of the N-glycosidic bond in the beta-(deoxy)ribonucleoside molecules, with the formation of the corresponding free purine bases and pentose-1-phosphate. The sequence is that of Purine nucleoside phosphorylase DeoD-type from Streptococcus pyogenes serotype M5 (strain Manfredo).